We begin with the raw amino-acid sequence, 148 residues long: MFGISFSELLLVGLVALLVLGPERLPGAARTAGLWVGRLKRSFNAIKQEVEREIGADEIRRQLHNEHILSLEQEARKIFTPVQQEPTPVEHVGEQTIHSPAAPTPAAPAVAPTESAPVVAPASVEHVAQTAAPTTPAPNDTTQPPRAP.

Residues 1-21 (MFGISFSELLLVGLVALLVLG) traverse the membrane as a helical segment. The segment at 85 to 148 (EPTPVEHVGE…NDTTQPPRAP (64 aa)) is disordered. Residues 107 to 148 (APAVAPTESAPVVAPASVEHVAQTAAPTTPAPNDTTQPPRAP) are compositionally biased toward low complexity.

The protein belongs to the TatB family. In terms of assembly, the Tat system comprises two distinct complexes: a TatABC complex, containing multiple copies of TatA, TatB and TatC subunits, and a separate TatA complex, containing only TatA subunits. Substrates initially bind to the TatABC complex, which probably triggers association of the separate TatA complex to form the active translocon.

The protein resides in the cell inner membrane. Its function is as follows. Part of the twin-arginine translocation (Tat) system that transports large folded proteins containing a characteristic twin-arginine motif in their signal peptide across membranes. Together with TatC, TatB is part of a receptor directly interacting with Tat signal peptides. TatB may form an oligomeric binding site that transiently accommodates folded Tat precursor proteins before their translocation. In Pseudomonas fluorescens (strain Pf0-1), this protein is Sec-independent protein translocase protein TatB.